A 230-amino-acid polypeptide reads, in one-letter code: Octanoyltransferase (230 aa).

The BPL/LPL catalytic domain occupies 38–215 (AGGADTLLLL…AVCAALDGVL (178 aa)). Substrate-binding positions include 76–83 (RGGKITWH), 145–147 (AIG), and 158–160 (GFA). Catalysis depends on Cys176, which acts as the Acyl-thioester intermediate.

It belongs to the LipB family.

The protein resides in the cytoplasm. It catalyses the reaction octanoyl-[ACP] + L-lysyl-[protein] = N(6)-octanoyl-L-lysyl-[protein] + holo-[ACP] + H(+). The protein operates within protein modification; protein lipoylation via endogenous pathway; protein N(6)-(lipoyl)lysine from octanoyl-[acyl-carrier-protein]: step 1/2. In terms of biological role, catalyzes the transfer of endogenously produced octanoic acid from octanoyl-acyl-carrier-protein onto the lipoyl domains of lipoate-dependent enzymes. Lipoyl-ACP can also act as a substrate although octanoyl-ACP is likely to be the physiological substrate. This Mycobacterium tuberculosis (strain ATCC 25177 / H37Ra) protein is Octanoyltransferase.